We begin with the raw amino-acid sequence, 1044 residues long: Multiple epidermal growth factor-like domains protein 11 (1044 aa).

The N-terminal stretch at 1-19 (MVLSLTGLIAFSFLQATLA) is a signal peptide. The Extracellular portion of the chain corresponds to 20–848 (LNPEDPNVCS…SPALGAERHS (829 aa)). Residues 24 to 101 (DPNVCSHWES…YYESGDFCIP (78 aa)) enclose the EMI domain. Cystine bridges form between Cys-28/Cys-89, Cys-54/Cys-63, Cys-88/Cys-99, Cys-103/Cys-118, Cys-120/Cys-129, Cys-146/Cys-154, Cys-148/Cys-161, Cys-163/Cys-172, Cys-185/Cys-197, Cys-191/Cys-204, Cys-206/Cys-215, Cys-228/Cys-240, Cys-234/Cys-247, and Cys-249/Cys-258. 9 consecutive EGF-like domains span residues 95–130 (SGDFCIPLCTEECVHGRCVSPDTCHCEPGWGGPDCS), 143–173 (SNRCQCQNGALCNPITGACVCAAGFRGWRCE), 181–216 (HGKGCQLPCQCRHGASCDPRAGECLCAPGYTGVYCE), 224–259 (HGAHCELRCPCQNGGTCHHITGECACPPGWTGAVCA), 267–302 (FGQNCSQDCPCHHGGQCDHVTGQCHCTAGYMGDRCQ), 310–345 (FGFQCSQHCDCHNGGQCSPTTGACECEPGYKGPRCQ), 399–434 (YGDGCQLPCTCQNGADCHSITGGCTCAPGFMGEVCA), 442–477 (YGPNCSSICSCNNGGTCSPVDGSCTCKEGWQGLDCT), and 490–520 (NESCTCANGAACSPIDGSCSCTPGWLGDTCE). Residue Asn-270 is glycosylated (N-linked (GlcNAc...) asparagine). Disulfide bonds link Cys-271/Cys-283, Cys-277/Cys-290, Cys-292/Cys-301, Cys-314/Cys-326, Cys-320/Cys-333, Cys-335/Cys-344, Cys-403/Cys-415, Cys-409/Cys-422, Cys-424/Cys-433, Cys-446/Cys-458, Cys-452/Cys-465, Cys-467/Cys-476, Cys-493/Cys-501, Cys-495/Cys-508, and Cys-510/Cys-519. N-linked (GlcNAc...) asparagine glycosylation is present at Asn-531. 5 consecutive EGF-like domains span residues 571–606 (WGPNCSVSCSCENGGSCSPEDGSCECAPGFRGPLCQ), 659–694 (FGQDCAQLCSCANNGTCSPIDGSCQCFPGWIGKDCS), 707–737 (FHACSCHNGASCSAEDGACHCTPGWTGLFCT), 750–780 (GRVCQCQNGASCDHISGKCTCRTGFTGQHCE), and 788–823 (FGYGCQQLCECMNNSTCDHVTGTCYCSPGFKGIRCD). 15 disulfides stabilise this stretch: Cys-575-Cys-587, Cys-581-Cys-594, Cys-596-Cys-605, Cys-663-Cys-675, Cys-669-Cys-682, Cys-684-Cys-693, Cys-710-Cys-718, Cys-712-Cys-725, Cys-727-Cys-736, Cys-753-Cys-761, Cys-755-Cys-768, Cys-770-Cys-779, Cys-792-Cys-804, Cys-798-Cys-811, and Cys-813-Cys-822. A helical membrane pass occupies residues 849 to 869 (VGAVTGIMLLLFLIVVLLGLF). Residues 870–1044 (AWHRRRQKEK…ANGPSQDKQS (175 aa)) are Cytoplasmic-facing. The tract at residues 1023-1044 (GHYDLLPVRQSPANGPSQDKQS) is disordered. The span at 1033 to 1044 (SPANGPSQDKQS) shows a compositional bias: polar residues.

Belongs to the MEGF family. As to quaternary structure, homomer. Does not interact with MEGF10.

Its subcellular location is the cell membrane. It localises to the basolateral cell membrane. Its function is as follows. May regulate the mosaic spacing of specific neuron subtypes in the retina through homotypic retinal neuron repulsion. Mosaics provide a mechanism to distribute each cell type evenly across the retina, ensuring that all parts of the visual field have access to a full set of processing elements. In Homo sapiens (Human), this protein is Multiple epidermal growth factor-like domains protein 11 (MEGF11).